The following is a 523-amino-acid chain: Lysine--tRNA ligase (523 aa).

The 'HIGH' region motif lies at 30-38 (PSGYVHVGN). Residues D95, C99, H100, H106, C177, H180, C199, and H203 each coordinate Zn(2+). The short motif at 279–283 (KMSGS) is the 'KMSKS' region element.

This sequence belongs to the class-I aminoacyl-tRNA synthetase family. Requires Zn(2+) as cofactor.

It localises to the cytoplasm. The catalysed reaction is tRNA(Lys) + L-lysine + ATP = L-lysyl-tRNA(Lys) + AMP + diphosphate. In Pyrococcus horikoshii (strain ATCC 700860 / DSM 12428 / JCM 9974 / NBRC 100139 / OT-3), this protein is Lysine--tRNA ligase (lysS).